Consider the following 583-residue polypeptide: Secretogranin-2b (583 aa).

Positions 1–28 (MMLSLPKLSAGGVVVLLATLLHTLTVQG) are cleaved as a signal peptide. Disordered regions lie at residues 123 to 159 (AGES…AGFV) and 526 to 583 (VDNG…VAGM). Over residues 534 to 546 (AKRDTQGKEEPEG) the composition is skewed to basic and acidic residues.

This sequence belongs to the chromogranin/secretogranin protein family.

The protein resides in the secreted. Neuroendocrine protein of the granin family that regulates the biogenesis of secretory granules. Required for neurovascular modeling of the hindbrain. Acts in a non-cell autonomous manner and is required for migration and proliferation of central artery endothelial cells. Required for normal courting behavior and spawning. The chain is Secretogranin-2b from Danio rerio (Zebrafish).